Here is a 1065-residue protein sequence, read N- to C-terminus: Alpha-L-arabinofuranosidase (1065 aa).

The N-terminal stretch at 1 to 26 is a signal peptide; sequence MKHWKKMAASLIAISTMVAVVPTTYA. The BIG2 domain maps to 277-346; that stretch reads VVNNKLTLIE…TTELGGVKAE (70 aa). A disordered region spans residues 997–1031; that stretch reads KAPTNPGEGDGDKGDGNKPTTPTTGDKTNVNKPGS. Over residues 1014-1031 the composition is skewed to polar residues; it reads KPTTPTTGDKTNVNKPGS. A helical transmembrane segment spans residues 1040 to 1060; the sequence is VLGLGGAVVALAIAGISLTLW.

The protein belongs to the glycosyl hydrolase 43 family.

The protein localises to the cell membrane. It carries out the reaction Hydrolysis of terminal non-reducing alpha-L-arabinofuranoside residues in alpha-L-arabinosides.. Functionally, involved in the type II arabinogalactan (AG) side chains degradation. Releases arabinofuranose (Araf) from alpha-1,3-Araf-substituted beta-1,6-galactooligosaccharides. Can use radish root AGP, larch AG and arabinan. Shows weaker activity with gum arabic and arabinoxylan. This chain is Alpha-L-arabinofuranosidase, found in Bifidobacterium longum subsp. longum (strain ATCC 15707 / DSM 20219 / JCM 1217 / NCTC 11818 / E194b).